A 474-amino-acid polypeptide reads, in one-letter code: Carbohydrate sulfotransferase 3 (474 aa).

Topologically, residues 1 to 19 (MEKGLALPQDCRDLVHNLK) are cytoplasmic. Residues 20 to 38 (IRGRYVLFLAFVVIVFIFI) form a helical; Signal-anchor for type II membrane protein membrane-spanning segment. The Lumenal portion of the chain corresponds to 39-474 (EKENKIISRV…LEERGTFWVT (436 aa)). N-linked (GlcNAc...) asparagine glycosylation is found at asparagine 63, asparagine 74, and asparagine 96. 3'-phosphoadenylyl sulfate is bound at residue 137 to 143 (TRTGSSF). Asparagine 252 is a glycosylation site (N-linked (GlcNAc...) asparagine). 3'-phosphoadenylyl sulfate is bound at residue 297-305 (RDPRAVLAS). 2 N-linked (GlcNAc...) asparagine glycosylation sites follow: asparagine 415 and asparagine 459.

The protein belongs to the sulfotransferase 1 family. Gal/GlcNAc/GalNAc subfamily. N-glycosylated.

The protein localises to the golgi apparatus membrane. The catalysed reaction is chondroitin beta-D-glucuronate + n 3'-phosphoadenylyl sulfate = chondroitin 6'-sulfate + n adenosine 3',5'-bisphosphate + n H(+). The enzyme catalyses 3'-phosphoadenylyl sulfate + keratan = adenosine 3',5'-bisphosphate + keratan 6'-sulfate.. Functionally, sulfotransferase that utilizes 3'-phospho-5'-adenylyl sulfate (PAPS) as sulfonate donor to catalyze the transfer of sulfate to position 6 of the N-acetylgalactosamine (GalNAc) residue of chondroitin. Chondroitin sulfate constitutes the predominant proteoglycan present in cartilage and is distributed on the surfaces of many cells and extracellular matrices. Catalyzes with a lower efficiency the sulfation of Gal residues of keratan sulfate, another glycosaminoglycan. Can also catalyze the sulfation of the Gal residues in sialyl N-acetyllactosamine (sialyl LacNAc) oligosaccharides. May play a role in the maintenance of naive T-lymphocytes in the spleen. The sequence is that of Carbohydrate sulfotransferase 3 (Chst3) from Rattus norvegicus (Rat).